The sequence spans 320 residues: Malate dehydrogenase (320 aa).

Residues 10–15 (GSGMIG) and Asp34 contribute to the NAD(+) site. 2 residues coordinate substrate: Arg83 and Arg89. NAD(+) contacts are provided by residues Asn96 and 119 to 121 (ITN). Substrate is bound by residues Asn121 and Arg152. Residue His176 is the Proton acceptor of the active site.

Belongs to the LDH/MDH superfamily. MDH type 3 family.

The catalysed reaction is (S)-malate + NAD(+) = oxaloacetate + NADH + H(+). In terms of biological role, catalyzes the reversible oxidation of malate to oxaloacetate. The chain is Malate dehydrogenase from Rhizobium rhizogenes (strain K84 / ATCC BAA-868) (Agrobacterium radiobacter).